A 1228-amino-acid chain; its full sequence is DNA-directed RNA polymerase subunit beta (1228 aa).

Residues 1175 to 1204 (ESVDEDEQPQGLGAFEIGGDEIEEDKEDDK) are disordered. Acidic residues predominate over residues 1192 to 1202 (GGDEIEEDKED).

This sequence belongs to the RNA polymerase beta chain family. In terms of assembly, the RNAP catalytic core consists of 2 alpha, 1 beta, 1 beta' and 1 omega subunit. When a sigma factor is associated with the core the holoenzyme is formed, which can initiate transcription.

The catalysed reaction is RNA(n) + a ribonucleoside 5'-triphosphate = RNA(n+1) + diphosphate. Functionally, DNA-dependent RNA polymerase catalyzes the transcription of DNA into RNA using the four ribonucleoside triphosphates as substrates. The sequence is that of DNA-directed RNA polymerase subunit beta from Caldicellulosiruptor bescii (strain ATCC BAA-1888 / DSM 6725 / KCTC 15123 / Z-1320) (Anaerocellum thermophilum).